The sequence spans 290 residues: Phosphatidylglycerol--prolipoprotein diacylglyceryl transferase (290 aa).

The next 7 membrane-spanning stretches (helical) occupy residues valine 21–alanine 41, leucine 60–tyrosine 80, tryptophan 96–phenylalanine 116, phenylalanine 124–leucine 144, serine 198–isoleucine 218, glycine 225–phenylalanine 245, and isoleucine 260–tryptophan 280. Position 143 (arginine 143) interacts with a 1,2-diacyl-sn-glycero-3-phospho-(1'-sn-glycerol).

It belongs to the Lgt family.

It is found in the cell inner membrane. It carries out the reaction L-cysteinyl-[prolipoprotein] + a 1,2-diacyl-sn-glycero-3-phospho-(1'-sn-glycerol) = an S-1,2-diacyl-sn-glyceryl-L-cysteinyl-[prolipoprotein] + sn-glycerol 1-phosphate + H(+). The protein operates within protein modification; lipoprotein biosynthesis (diacylglyceryl transfer). In terms of biological role, catalyzes the transfer of the diacylglyceryl group from phosphatidylglycerol to the sulfhydryl group of the N-terminal cysteine of a prolipoprotein, the first step in the formation of mature lipoproteins. The protein is Phosphatidylglycerol--prolipoprotein diacylglyceryl transferase of Enterobacter sp. (strain 638).